Consider the following 159-residue polypeptide: Riboflavin kinase (159 aa).

38–43 (GLGEGR) contributes to the CDP binding site. Residues Thr67 and Asn69 each contribute to the Mg(2+) site. FMN-binding residues include Thr126 and Glu134. 139-142 (HKLR) provides a ligand contact to CDP.

It belongs to the archaeal riboflavin kinase family. It depends on Mg(2+) as a cofactor.

It carries out the reaction riboflavin + CTP = CDP + FMN + H(+). The protein operates within cofactor biosynthesis; FMN biosynthesis; FMN from riboflavin (CTP route): step 1/1. Its function is as follows. Catalyzes the CTP-dependent phosphorylation of riboflavin (vitamin B2) to form flavin mononucleotide (FMN). The chain is Riboflavin kinase from Sulfolobus acidocaldarius (strain ATCC 33909 / DSM 639 / JCM 8929 / NBRC 15157 / NCIMB 11770).